The following is a 232-amino-acid chain: Proteasome subunit alpha type-2 (232 aa).

It belongs to the peptidase T1A family. As to quaternary structure, the 26S proteasome consists of a 20S proteasome core and two 19S regulatory subunits. The 20S proteasome core is composed of 28 subunits that are arranged in four stacked rings, resulting in a barrel-shaped structure. The two end rings are each formed by seven alpha subunits, and the two central rings are each formed by seven beta subunits. The catalytic chamber with the active sites is on the inside of the barrel.

The protein localises to the cytoplasm. It is found in the nucleus. Functionally, the proteasome is a multicatalytic proteinase complex which is characterized by its ability to cleave peptides with Arg, Phe, Tyr, Leu, and Glu adjacent to the leaving group at neutral or slightly basic pH. The proteasome has an ATP-dependent proteolytic activity. The protein is Proteasome subunit alpha type-2 (psmA2) of Dictyostelium discoideum (Social amoeba).